Here is a 362-residue protein sequence, read N- to C-terminus: MNSRVFNFGAGPAMLPEEILKEAQEEFLNWRNTGMSILEIGHRTPEIINLLSTAEQSLRELLNIPKNYHVLFLGGAARAQFAMIPMNLLQPGDEAAYFITGIWSKMAYHEANLLKQAYYLSNEEKEGFVSIPDYQKWELKSNTPYVYYTPNETINGVRFPYVPKTGGVPLVADMTSCLLSEPININQYGLIFAGAQKNIANAGLTIVIIHEDLLKNQPEPAIPTMLNYKNHAEHRSLYATPPVFNCYLASKMFEWIKTQGGIEGVFQRNCLKAAKLYQYLDSTDFYLTPVSKEARSIMNICFSLCYPDLEQKFLDMANKRGLKALKGHRFTGGLRASLYNAMPMAGVDALIEFMSEFAKENG.

Residue Arg43 coordinates L-glutamate. Residues 77–78 (AR), Trp103, Thr153, Asp173, and Gln196 contribute to the pyridoxal 5'-phosphate site. The residue at position 197 (Lys197) is an N6-(pyridoxal phosphate)lysine.

It belongs to the class-V pyridoxal-phosphate-dependent aminotransferase family. SerC subfamily. In terms of assembly, homodimer. Pyridoxal 5'-phosphate is required as a cofactor.

It localises to the cytoplasm. It catalyses the reaction O-phospho-L-serine + 2-oxoglutarate = 3-phosphooxypyruvate + L-glutamate. The catalysed reaction is 4-(phosphooxy)-L-threonine + 2-oxoglutarate = (R)-3-hydroxy-2-oxo-4-phosphooxybutanoate + L-glutamate. Its pathway is amino-acid biosynthesis; L-serine biosynthesis; L-serine from 3-phospho-D-glycerate: step 2/3. The protein operates within cofactor biosynthesis; pyridoxine 5'-phosphate biosynthesis; pyridoxine 5'-phosphate from D-erythrose 4-phosphate: step 3/5. Its function is as follows. Catalyzes the reversible conversion of 3-phosphohydroxypyruvate to phosphoserine and of 3-hydroxy-2-oxo-4-phosphonooxybutanoate to phosphohydroxythreonine. This is Phosphoserine aminotransferase from Legionella pneumophila (strain Paris).